Consider the following 396-residue polypeptide: MNVLNRRQALQRALLNGKNKQDAYHPFPWYESMRKDAPVSFDEENQVWSVFLYDDVKKVVGDKELFSSCMPQQTSSIGNSIINMDPPKHTKIRSVVNKAFTPRVMKQWEPRIQEITDELIQKFQGRSEFDLVHDFSYPLPVIVISELLGVPSAHMEQFKAWSDLLVSTPKDKSEEAEKAFLEERDKCEEELAAFFAGIIEEKRNKPEQDIISILVEAEETGEKLSGEELIPFCTLLLVAGNETTTNLISNAMYSILETPGVYEELRSHPELMPQAVEEALRFRAPAPVLRRIAKRDTEIGGHLIKEGDMVLAFVASANRDEAKFDRPHMFDIRRHPNPHIAFGHGIHFCLGAPLARLEANIALTSLISAFPHMECVSITPIENSVIYGLKSFRVKM.

Cysteine 349 contacts heme.

It belongs to the cytochrome P450 family. Heme is required as a cofactor.

The protein is Putative cytochrome P450 YjiB (yjiB) of Bacillus subtilis (strain 168).